Here is a 26-residue protein sequence, read N- to C-terminus: Thrombopoietin (26 aa).

Belongs to the EPO/TPO family.

Its subcellular location is the secreted. Lineage-specific cytokine affecting the proliferation and maturation of megakaryocytes from their committed progenitor cells. It acts at a late stage of megakaryocyte development. It may be the major physiological regulator of circulating platelets. The polypeptide is Thrombopoietin (THPO) (Sus scrofa (Pig)).